A 224-amino-acid polypeptide reads, in one-letter code: UPF0173 metal-dependent hydrolase TK0141 (224 aa).

Belongs to the UPF0173 family.

The chain is UPF0173 metal-dependent hydrolase TK0141 from Thermococcus kodakarensis (strain ATCC BAA-918 / JCM 12380 / KOD1) (Pyrococcus kodakaraensis (strain KOD1)).